A 263-amino-acid chain; its full sequence is Hydroxyacylglutathione hydrolase (263 aa).

Histidine 60, histidine 62, aspartate 64, histidine 65, histidine 120, aspartate 137, and histidine 175 together coordinate Zn(2+).

This sequence belongs to the metallo-beta-lactamase superfamily. Glyoxalase II family. As to quaternary structure, monomer. Zn(2+) is required as a cofactor.

The enzyme catalyses an S-(2-hydroxyacyl)glutathione + H2O = a 2-hydroxy carboxylate + glutathione + H(+). It functions in the pathway secondary metabolite metabolism; methylglyoxal degradation; (R)-lactate from methylglyoxal: step 2/2. Functionally, thiolesterase that catalyzes the hydrolysis of S-D-lactoyl-glutathione to form glutathione and D-lactic acid. The polypeptide is Hydroxyacylglutathione hydrolase (Shewanella pealeana (strain ATCC 700345 / ANG-SQ1)).